Consider the following 499-residue polypeptide: uncharacterized protein (499 aa).

Residues 10 to 57 (CGICGQEYSEDEKLLIPRILTECGHTICTGCAGKIKGQSSIIACPFDR) form an RING-type; degenerate zinc finger. The B box-type; degenerate zinc-finger motif lies at 101–147 (NKNGVCDENTNHHASNYCETCDADLCEECWTWIHSISTLAHHEKKMI).

This is an uncharacterized protein from Caenorhabditis elegans.